A 532-amino-acid polypeptide reads, in one-letter code: MESTTVLLAASTLLLVLHASYGQFPRACSTAQVLLSKECCPVWPGDNSSCGEVSGRGVCQDVVPSNSPVGAQFPFSGIDDRENWPIVFYNRTCQCQGNFMGYNCGECRFGYTGPNCTVRRNMIRKEIFRMTTAEKDKFIAYLNLAKRTISQDYVISTGTYEQMNNGSNPMFADINVYDLFVWLHYYASRDAFLEDGSVWANIDFAHEAPGFPPWHRFFLLLWEREIQKVAADDNFTIPFWDWRDAQQCDLCTDEFFGGTHPTSNNLLSPASFFSSWQVICSQPEEYNRLRIICNGTNEGPLLRSPGRHDRNRTPRLPTSADVEACLSLTDYETGAMDRFANFSFRNTLEGYAVPASGIANRSQSNMHNSLHVFMNGSMSNVQGSANDPIFVLHHAFVDSLFEQWLRRHQPSLDVYPEANAPVGHNREYNMVPFIPLFTNGEFFVQSRDLGYDYDYLAESGSIEDFLLPYLEQARQIWQWLLGAAVVGGLVTAVIATIISLTCRRKRRTKTSEETRPLLMEAEDYHATYQSNL.

Residues 1 to 22 (MESTTVLLAASTLLLVLHASYG) form the signal peptide. The Lumenal, melanosome segment spans residues 23-479 (QFPRACSTAQ…LEQARQIWQW (457 aa)). Asn-90, Asn-115, and Asn-165 each carry an N-linked (GlcNAc...) asparagine glycan. Cu cation-binding residues include His-184, His-206, and His-215. Residues Asn-234 and Asn-341 are each glycosylated (N-linked (GlcNAc...) asparagine). The Cu cation site is built by His-367 and His-371. N-linked (GlcNAc...) asparagine glycosylation is present at Asn-375. His-394 is a Cu cation binding site. Residues 480-500 (LLGAAVVGGLVTAVIATIISL) form a helical membrane-spanning segment. Residues 501–532 (TCRRKRRTKTSEETRPLLMEAEDYHATYQSNL) are Cytoplasmic-facing.

Belongs to the tyrosinase family. As to quaternary structure, active tyrosinase has been found as a homodimer and homotetramer. The cofactor is Cu(2+). As to expression, frog skin.

Its subcellular location is the melanosome membrane. It catalyses the reaction 2 L-dopa + O2 = 2 L-dopaquinone + 2 H2O. The catalysed reaction is L-tyrosine + O2 = L-dopaquinone + H2O. With respect to regulation, activated by trypsin, chymotrypsin and subtilisin. Activated by alpha-chymotrypsin, thermolysin and Pronase. Inhibited by its product L-DOPA and tyrosine. Its function is as follows. This is a copper-containing oxidase that functions in the formation of pigments such as melanins and other polyphenolic compounds. Catalyzes the initial and rate limiting step in the cascade of reactions leading to melanin production from tyrosine. In addition to hydroxylating tyrosine to DOPA (3,4-dihydroxyphenylalanine), also catalyzes the oxidation of DOPA to DOPA-quinone. The sequence is that of Tyrosinase from Pelophylax lessonae (Pool frog).